A 419-amino-acid chain; its full sequence is Serine hydroxymethyltransferase (419 aa).

(6S)-5,6,7,8-tetrahydrofolate-binding positions include leucine 121 and 125 to 127 (GHL). The residue at position 229 (lysine 229) is an N6-(pyridoxal phosphate)lysine. (6S)-5,6,7,8-tetrahydrofolate is bound at residue 354–356 (SPF).

It belongs to the SHMT family. Homodimer. It depends on pyridoxal 5'-phosphate as a cofactor.

The protein resides in the cytoplasm. The catalysed reaction is (6R)-5,10-methylene-5,6,7,8-tetrahydrofolate + glycine + H2O = (6S)-5,6,7,8-tetrahydrofolate + L-serine. The protein operates within one-carbon metabolism; tetrahydrofolate interconversion. It functions in the pathway amino-acid biosynthesis; glycine biosynthesis; glycine from L-serine: step 1/1. Functionally, catalyzes the reversible interconversion of serine and glycine with tetrahydrofolate (THF) serving as the one-carbon carrier. This reaction serves as the major source of one-carbon groups required for the biosynthesis of purines, thymidylate, methionine, and other important biomolecules. Also exhibits THF-independent aldolase activity toward beta-hydroxyamino acids, producing glycine and aldehydes, via a retro-aldol mechanism. The polypeptide is Serine hydroxymethyltransferase (Coxiella burnetii (strain RSA 493 / Nine Mile phase I)).